The sequence spans 257 residues: TLC domain-containing protein 3A (257 aa).

The next 7 membrane-spanning stretches (helical) occupy residues 1–21 (MLLTLASGALFFPGLFALSIW), 42–62 (LVSSVQAVLATWAGLTVIISC), 71–91 (WLATEYVWFLIPYMIYDFYAM), 114–134 (LIENRLMVTHHTVILLFLVPI), 142–162 (LGDFFVGCIFTAELSTPFVSL), 181–201 (GILTVTTFLFCRILLFPFMYW), and 220–240 (LHCNMANAVLISPQLYWFSLL). The region spanning 33 to 249 (DDCLTVGTRL…LCKKAARLFD (217 aa)) is the TLC domain.

As to quaternary structure, interacts with GGT7 isoform 3 and SLC3A2.

It localises to the cell membrane. The chain is TLC domain-containing protein 3A (Tlcd3a) from Mus musculus (Mouse).